We begin with the raw amino-acid sequence, 181 residues long: Thioredoxin-like protein CITRX1, chloroplastic (181 aa).

The interval 1 to 20 (MQAATLSFHPSAPPPQTSAC) is disordered. The transit peptide at 1-70 (MQAATLSFHP…PAVATGKYVR (70 aa)) directs the protein to the chloroplast. A Thioredoxin domain is found at 71-181 (EDYLVKKVSA…MMRDIINNDL (111 aa)). Residues Cys-104 and Cys-107 each act as nucleophile in the active site. An intrachain disulfide couples Cys-104 to Cys-107.

The protein belongs to the thioredoxin family. Plant CITRX-type subfamily.

It localises to the plastid. It is found in the chloroplast. In terms of biological role, probable thiol-disulfide oxidoreductase that may play a role in proper chloroplast development. The protein is Thioredoxin-like protein CITRX1, chloroplastic of Nicotiana benthamiana.